Consider the following 34-residue polypeptide: Photosystem II reaction center protein M (34 aa).

The chain crosses the membrane as a helical span at residues 5–25 (ILAFIATALFILVPTAFLLII).

It belongs to the PsbM family. In terms of assembly, PSII is composed of 1 copy each of membrane proteins PsbA, PsbB, PsbC, PsbD, PsbE, PsbF, PsbH, PsbI, PsbJ, PsbK, PsbL, PsbM, PsbT, PsbX, PsbY, PsbZ, Psb30/Ycf12, at least 3 peripheral proteins of the oxygen-evolving complex and a large number of cofactors. It forms dimeric complexes.

The protein resides in the plastid. The protein localises to the chloroplast thylakoid membrane. One of the components of the core complex of photosystem II (PSII). PSII is a light-driven water:plastoquinone oxidoreductase that uses light energy to abstract electrons from H(2)O, generating O(2) and a proton gradient subsequently used for ATP formation. It consists of a core antenna complex that captures photons, and an electron transfer chain that converts photonic excitation into a charge separation. This subunit is found at the monomer-monomer interface. The chain is Photosystem II reaction center protein M from Cucumis sativus (Cucumber).